We begin with the raw amino-acid sequence, 313 residues long: Ribosomal RNA small subunit methyltransferase H (313 aa).

S-adenosyl-L-methionine-binding positions include 35–37 (GGY), Asp-53, Phe-80, Asp-101, and Gln-108.

The protein belongs to the methyltransferase superfamily. RsmH family.

The protein resides in the cytoplasm. The catalysed reaction is cytidine(1402) in 16S rRNA + S-adenosyl-L-methionine = N(4)-methylcytidine(1402) in 16S rRNA + S-adenosyl-L-homocysteine + H(+). In terms of biological role, specifically methylates the N4 position of cytidine in position 1402 (C1402) of 16S rRNA. The protein is Ribosomal RNA small subunit methyltransferase H of Acidiphilium cryptum (strain JF-5).